The following is a 278-amino-acid chain: Large ribosomal subunit protein uL2c (278 aa).

The tract at residues 224-256 (NPVDHPHGGGEGRAPIGRKKPTTPWGYPALGRK) is disordered.

It belongs to the universal ribosomal protein uL2 family. In terms of assembly, part of the 50S ribosomal subunit.

Its subcellular location is the plastid. The polypeptide is Large ribosomal subunit protein uL2c (rpl2) (Cuscuta exaltata (Tall dodder)).